The primary structure comprises 557 residues: Estrogen receptor beta (557 aa).

Residues 1–154 (MMAAASSPEK…SSGGKADLHY (154 aa)) form a modulating region. 2 consecutive NR C4-type zinc fingers follow at residues 155–175 (CAVC…CEGC) and 191–215 (CPAT…LRKC). Positions 155 to 220 (CAVCHDYASG…RLRKCYEVGM (66 aa)) form a DNA-binding region, nuclear receptor. Residues 240–268 (LTRLSSQGKTAEPKGITGPAEGSLNKPEK) are disordered. In terms of domain architecture, NR LBD spans 272–508 (TPEQLIERIL…DLLLEMLDAH (237 aa)). Residues 513-557 (SCLPHQPPQQDSKDQSEVPAPLHSSAGGPSNTWTPSSARAGGESQ) are disordered. Over residues 539–557 (GGPSNTWTPSSARAGGESQ) the composition is skewed to polar residues.

The protein belongs to the nuclear hormone receptor family. NR3 subfamily. As to quaternary structure, binds DNA as a homodimer. Can form a heterodimer with ER-alpha.

The protein resides in the nucleus. Its function is as follows. Binds estrogens with an affinity similar to that of ER-alpha, and activates expression of reporter genes containing estrogen response elements (ERE) in an estrogen-dependent manner. This is Estrogen receptor beta (esr2) from Oreochromis niloticus (Nile tilapia).